A 272-amino-acid chain; its full sequence is Ribosomal RNA small subunit methyltransferase A (272 aa).

N18, L20, G45, E66, D91, and N113 together coordinate S-adenosyl-L-methionine.

It belongs to the class I-like SAM-binding methyltransferase superfamily. rRNA adenine N(6)-methyltransferase family. RsmA subfamily.

It is found in the cytoplasm. The catalysed reaction is adenosine(1518)/adenosine(1519) in 16S rRNA + 4 S-adenosyl-L-methionine = N(6)-dimethyladenosine(1518)/N(6)-dimethyladenosine(1519) in 16S rRNA + 4 S-adenosyl-L-homocysteine + 4 H(+). Its function is as follows. Specifically dimethylates two adjacent adenosines (A1518 and A1519) in the loop of a conserved hairpin near the 3'-end of 16S rRNA in the 30S particle. May play a critical role in biogenesis of 30S subunits. The protein is Ribosomal RNA small subunit methyltransferase A of Photorhabdus laumondii subsp. laumondii (strain DSM 15139 / CIP 105565 / TT01) (Photorhabdus luminescens subsp. laumondii).